Consider the following 176-residue polypeptide: Large ribosomal subunit protein uL10 (176 aa).

This sequence belongs to the universal ribosomal protein uL10 family. Part of the ribosomal stalk of the 50S ribosomal subunit. The N-terminus interacts with L11 and the large rRNA to form the base of the stalk. The C-terminus forms an elongated spine to which L12 dimers bind in a sequential fashion forming a multimeric L10(L12)X complex.

In terms of biological role, forms part of the ribosomal stalk, playing a central role in the interaction of the ribosome with GTP-bound translation factors. This Dehalococcoides mccartyi (strain ATCC BAA-2100 / JCM 16839 / KCTC 5957 / BAV1) protein is Large ribosomal subunit protein uL10.